A 199-amino-acid chain; its full sequence is Recombination protein RecR (199 aa).

The segment at 57 to 72 (CSVCGNITEQDPCAIC) adopts a C4-type zinc-finger fold. The Toprim domain occupies 80–176 (STIMVVEEAK…KVTRLAAGLA (97 aa)).

This sequence belongs to the RecR family.

May play a role in DNA repair. It seems to be involved in an RecBC-independent recombinational process of DNA repair. It may act with RecF and RecO. This is Recombination protein RecR from Lactobacillus delbrueckii subsp. bulgaricus (strain ATCC BAA-365 / Lb-18).